Consider the following 299-residue polypeptide: Apolipoprotein E (299 aa).

The N-terminal stretch at 1 to 18 is a signal peptide; sequence MKVLCTVLVVTLLAGCRA. Tandem repeats lie at residues 74–95, 96–117, 118–139, 140–161, 162–183, 184–205, and 224–245. The interval 74–245 is 8 X 22 AA approximate tandem repeats; it reads VLMEDTMKAV…RLEEMREQME (172 aa). The residue at position 137 (Met137) is a Methionine sulfoxide. The residue at position 141 (Ser141) is a Phosphoserine. The segment at 152–162 is LDL and other lipoprotein receptors binding; the sequence is HLRKLRKRMLR. 156–159 serves as a coordination point for heparin; that stretch reads LRKR. The tract at residues 204–273 is lipid-binding and lipoprotein association; that stretch reads AALTGQPLQE…GWFEPMVEDM (70 aa). 219 to 226 provides a ligand contact to heparin; it reads GKQLRGRL. A specificity for association with VLDL region spans residues 261 to 273; the sequence is RLKGWFEPMVEDM.

The protein belongs to the apolipoprotein A1/A4/E family. In terms of assembly, homotetramer. May interact with ABCA1; functionally associated with ABCA1 in the biogenesis of HDLs. May interact with APP/A4 amyloid-beta peptide; the interaction is extremely stable in vitro but its physiological significance is unclear. May interact with MAPT. May interact with MAP2. In the cerebrospinal fluid, interacts with secreted SORL1. Interacts with PMEL; this allows the loading of PMEL luminal fragment on ILVs to induce fibril nucleation. Post-translationally, APOE exists as multiple glycosylated and sialylated glycoforms within cells and in plasma. The extent of glycosylation and sialylation are tissue and context specific. In terms of processing, glycated in plasma VLDL. Phosphorylated by FAM20C in the extracellular medium.

It localises to the secreted. The protein localises to the extracellular space. Its subcellular location is the extracellular matrix. It is found in the extracellular vesicle. The protein resides in the endosome. It localises to the multivesicular body. Functionally, APOE is an apolipoprotein, a protein associating with lipid particles, that mainly functions in lipoprotein-mediated lipid transport between organs via the plasma and interstitial fluids. APOE is a core component of plasma lipoproteins and is involved in their production, conversion and clearance. Apolipoproteins are amphipathic molecules that interact both with lipids of the lipoprotein particle core and the aqueous environment of the plasma. As such, APOE associates with chylomicrons, chylomicron remnants, very low density lipoproteins (VLDL) and intermediate density lipoproteins (IDL) but shows a preferential binding to high-density lipoproteins (HDL). It also binds a wide range of cellular receptors including the LDL receptor/LDLR, the LDL receptor-related proteins LRP1, LRP2 and LRP8 and the very low-density lipoprotein receptor/VLDLR that mediate the cellular uptake of the APOE-containing lipoprotein particles. Finally, APOE also has a heparin-binding activity and binds heparan-sulfate proteoglycans on the surface of cells, a property that supports the capture and the receptor-mediated uptake of APOE-containing lipoproteins by cells. A main function of APOE is to mediate lipoprotein clearance through the uptake of chylomicrons, VLDLs, and HDLs by hepatocytes. APOE is also involved in the biosynthesis by the liver of VLDLs as well as their uptake by peripheral tissues ensuring the delivery of triglycerides and energy storage in muscle, heart and adipose tissues. By participating in the lipoprotein-mediated distribution of lipids among tissues, APOE plays a critical role in plasma and tissues lipid homeostasis. APOE is also involved in two steps of reverse cholesterol transport, the HDLs-mediated transport of cholesterol from peripheral tissues to the liver, and thereby plays an important role in cholesterol homeostasis. First, it is functionally associated with ABCA1 in the biogenesis of HDLs in tissues. Second, it is enriched in circulating HDLs and mediates their uptake by hepatocytes. APOE also plays an important role in lipid transport in the central nervous system, regulating neuron survival and sprouting. The polypeptide is Apolipoprotein E (APOE) (Octodon degus (Degu)).